The primary structure comprises 115 residues: Large ribosomal subunit protein bL19 (115 aa).

It belongs to the bacterial ribosomal protein bL19 family.

In terms of biological role, this protein is located at the 30S-50S ribosomal subunit interface and may play a role in the structure and function of the aminoacyl-tRNA binding site. The protein is Large ribosomal subunit protein bL19 of Pectobacterium atrosepticum (strain SCRI 1043 / ATCC BAA-672) (Erwinia carotovora subsp. atroseptica).